We begin with the raw amino-acid sequence, 280 residues long: 2-dehydro-3-deoxyphosphooctonate aldolase (280 aa).

It belongs to the KdsA family.

It is found in the cytoplasm. It catalyses the reaction D-arabinose 5-phosphate + phosphoenolpyruvate + H2O = 3-deoxy-alpha-D-manno-2-octulosonate-8-phosphate + phosphate. It participates in carbohydrate biosynthesis; 3-deoxy-D-manno-octulosonate biosynthesis; 3-deoxy-D-manno-octulosonate from D-ribulose 5-phosphate: step 2/3. It functions in the pathway bacterial outer membrane biogenesis; lipopolysaccharide biosynthesis. The chain is 2-dehydro-3-deoxyphosphooctonate aldolase from Coxiella burnetii (strain Dugway 5J108-111).